Reading from the N-terminus, the 897-residue chain is DNA endonuclease RBBP8 (897 aa).

The interval 22–45 is essential for binding to the MRN complex and for RPA focus formation on DNA damage; that stretch reads DLWTKLKECHDREVQGLQVKVTKL. Positions 35-84 form a coiled coil; that stretch reads VQGLQVKVTKLKQERILDAQRLEEFFTKNQQLREQQKVLHETIKVLEDRL. Residues 45 to 160 form a required for interaction with LMO4, probably by stabilizing the interaction through RPPB8 dimerization region; that stretch reads LKQERILDAQ…AELECEEDVI (116 aa). Glycyl lysine isopeptide (Lys-Gly) (interchain with G-Cter in SUMO2) cross-links involve residues K62 and K115. A coiled-coil region spans residues 117 to 138; the sequence is ITELMNERNTLQEENKKLSEQL. Residue K193 forms a Glycyl lysine isopeptide (Lys-Gly) (interchain with G-Cter in SUMO2) linkage. 2 positions are modified to phosphoserine: S233 and S276. The span at 292–307 shows a compositional bias: basic and acidic residues; that stretch reads KQPFEESTRNTEDSLR. Residues 292–325 are disordered; that stretch reads KQPFEESTRNTEDSLRFSDSTSKTPPQEELPTRV. T315 carries the phosphothreonine; by CDK2 modification. S326, S327, and S349 each carry phosphoserine. Glycyl lysine isopeptide (Lys-Gly) (interchain with G-Cter in SUMO2) cross-links involve residues K360 and K378. The residue at position 379 (S379) is a Phosphoserine. Glycyl lysine isopeptide (Lys-Gly) (interchain with G-Cter in SUMO2) cross-links involve residues K396, K404, and K410. The tract at residues 419 to 464 is disordered; the sequence is QNRTEYGKDSNTDKHLEPLKSLGGRTSKRKKTEEESEHEVSCPQAS. Residues 420 to 436 are compositionally biased toward basic and acidic residues; it reads NRTEYGKDSNTDKHLEP. Residues K438 and K449 each participate in a glycyl lysine isopeptide (Lys-Gly) (interchain with G-Cter in SUMO2) cross-link. The PXDLS motif signature appears at 490–494; it reads PLDLS. The damage-recruitment motif stretch occupies residues 509–557; the sequence is SETSKNKFRQVTLYEALKTIPKGFSSSRKASDGNCTLPKDSPGEPCSQE. Residue K526 forms a Glycyl lysine isopeptide (Lys-Gly) (interchain with G-Cter in SUMO2); alternate linkage. Glycyl lysine isopeptide (Lys-Gly) (interchain with G-Cter in SUMO2) cross-links involve residues K530, K572, and K578. A Glycyl lysine isopeptide (Lys-Gly) (interchain with G-Cter in SUMO2); alternate cross-link involves residue K604. Glycyl lysine isopeptide (Lys-Gly) (interchain with G-Cter in SUMO2) cross-links involve residues K613, K638, and K640. The required for interaction with LMO4, probably by making physical contact with LMO4 stretch occupies residues 641–685; it reads SLQNNQDVSFENIQWSIDPGADLSQYKMDVTVIDTKDGSQSKLGG. Position 664 is a phosphoserine; by ATM (S664). K676 participates in a covalent cross-link: Glycyl lysine isopeptide (Lys-Gly) (interchain with G-Cter in SUMO2). Position 679 is a phosphoserine (S679). Residues 704–723 form a disordered region; the sequence is KKQEQKGEKSSNEERKMNDS. A Glycyl lysine isopeptide (Lys-Gly) (interchain with G-Cter in SUMO2) cross-link involves residue K719. S723 is modified (phosphoserine). S745 is modified (phosphoserine; by ATM). K782 participates in a covalent cross-link: Glycyl lysine isopeptide (Lys-Gly) (interchain with G-Cter in SUMO2). A KLHL15-binding motif is present at residues 840–842; sequence FRY. Position 847 is a phosphothreonine; by CDK1 (T847). At T859 the chain carries Phosphothreonine; by ATR. K869 participates in a covalent cross-link: Glycyl lysine isopeptide (Lys-Gly) (interchain with G-Cter in SUMO2). A disordered region spans residues 873 to 897; it reads DPCPRPKRRQPYNAIFSPKGKEQKT.

Belongs to the COM1/SAE2/CtIP family. As to quaternary structure, homotetramer; formed by antiparallel association of helical extensions protruding from the N-termini of two parallel coiled-coil dimers. Forms a dumbbell-shaped particle in which polar globular domains are held about 30 nm apart by a central rod. Homotetramerization is required for DNA-end resection and repair. Interacts (via the PXDLS motif) with CTBP1; the interaction is disrupted via binding of the adenovirus E1A to CTBP1. Component of the BRCA1-RBBP8 complex. Interacts (the Ser-327 phosphorylated form) with BRCA1 (via the C-terminal BRCT domains): the interaction occurs in the G2 phase, ubiquitinates RBBP8 and involves RBBP8 in BRCA1-dependent G2/M checkpoint control on DNA damage. Interacts with RB1. Interacts with the MRN complex; interacts directly with MRE11; the interaction is required for efficient homologous recombination (HR) and regulation of the MRN complex. Interacts directly with RAD50. Interacts (when phosphorylated by CDK1) with NBN; promoting association with the MRN complex. Interacts with LM04 (via the LIM zinc-binding 1 domain). Interacts with SIAH1. Interacts with RNF138. Interacts with EXD2. Interacts with CUL3 and KLHL15; this interaction leads to RBBP8 proteasomal degradation. Directly interacts with PIN1; this interaction depends upon RBBP8 phosphorylation, predominantly at Thr-315. Interacts with FZR1; this interaction leads to APC/C-mediated RBBP8 proteasomal degradation. Interacts with AUNIP; leading to recruitment of RBBP8 to sites of DNA damage. Interacts with SAMHD1. Interacts with HDGFL2. Post-translationally, hyperphosphorylation upon ionizing radiation results in dissociation from BRCA1. Phosphorylation at Thr-847 by CDK1 is essential for the recruitment to DNA and the DNA repair function. Phosphorylation at Thr-847 and Thr-859 promote interaction with NBN and recruitment to double-strand breaks (DSBs). Phosphorylated on Ser-327 as cells enter G2 phase. This phosphorylation is required for binding BRCA1 and for the G2/M DNA damage transition checkpoint control. Phosphorylation at Thr-315, probably catalyzed by CDK2, is required for PIN1-binding, while phosphorylation at Ser-276 serves as a PIN1 isomerization site. Phosphorylation at Thr-315 is cell-cycle dependent. It steadily increases during S phase, peaks at late S/G2 phase, and drops at G1. Phosphorylation is not required for tetramerization. Binds to DNA more strongly when dephosphorylated. Ubiquitinated. Ubiquitination at multiple sites by BRCA1 (via its N-terminal RING domain) does not lead to its proteasomal degradation but instead the ubiquitinated RBBP8 binds to chromatin following DNA damage and may play a role in G2/M checkpoint control. Ubiquitinated by RNF138 at its N-terminus. Ubiquitinated through 'Lys-48' by the E3 CUL3-KLHL15 complex; this modification leads to proteasomal degradation. Ubiquitinated by the E3 FZR1/APC/C complex; this modification leads to proteasomal degradation. Expressed in ER-positive breast cancer lines, but tends to be down-regulated ER-negative cells (at protein level).

It is found in the nucleus. It localises to the chromosome. Endonuclease that cooperates with the MRE11-RAD50-NBN (MRN) complex in DNA-end resection, the first step of double-strand break (DSB) repair through the homologous recombination (HR) pathway. HR is restricted to S and G2 phases of the cell cycle and preferentially repairs DSBs resulting from replication fork collapse. Key determinant of DSB repair pathway choice, as it commits cells to HR by preventing classical non-homologous end-joining (NHEJ). Specifically promotes the endonuclease activity of the MRN complex to clear DNA ends containing protein adducts: recruited to DSBs by NBN following phosphorylation by CDK1, and promotes the endonuclease activity of MRE11 to clear protein-DNA adducts and generate clean double-strand break ends. Functions downstream of the MRN complex and ATM, promotes ATR activation and its recruitment to DSBs in the S/G2 phase facilitating the generation of ssDNA. Component of the BRCA1-RBBP8 complex that regulates CHEK1 activation and controls cell cycle G2/M checkpoints on DNA damage. During immunoglobulin heavy chain class-switch recombination, promotes microhomology-mediated alternative end joining (A-NHEJ) and plays an essential role in chromosomal translocations. Binds preferentially to DNA Y-junctions and to DNA substrates with blocked ends and promotes intermolecular DNA bridging. The chain is DNA endonuclease RBBP8 (RBBP8) from Homo sapiens (Human).